A 227-amino-acid polypeptide reads, in one-letter code: GRF-interacting factor 1 (227 aa).

Residues 186–227 (RSGSGAKEGSTSLSVDVRGGTSSGAQSGDGEYLKVGTEEEGS) are disordered.

The protein belongs to the SS18 family. In terms of assembly, interacts with several GRFs. Interacts with GRF10. Interacts with GRF1. In terms of tissue distribution, expressed in shoots, aerial roots, ears and tassels. Expressed in the shoot apical meristem (SAM), young leaf primordia, leaf margins, inflorescence meristem, floral meristem and spikelet meristem.

In terms of biological role, transcription coactivator that plays a role in the regulation of meristematic function in leaves, stems and inflorescences. Regulates shoot architecture and meristem determinacy. Binds to the inflorescence architecture gene UB3 (unbranched3). Regulates the expression of several genes involved in inflorescence architecture. Component of a network formed by the microRNA396 (miRNA396), the GRFs and their interacting factors (GIFs) acting in the regulation of meristem function, at least partially through the control of cell proliferation. Associates with the core SWI/SNF chromatin-remodeling complex and specific GRFs to tightly regulate the transition between cell division and cell expansion in growing leaves. The sequence is that of GRF-interacting factor 1 from Zea mays (Maize).